We begin with the raw amino-acid sequence, 310 residues long: Transcriptional activator BRRF1 (310 aa).

This sequence belongs to the lymphocryptovirus BBRF1 family.

Enhances the ability of BRLF1 to induce lytic infection by cooperating with it to transcriptionally activate the BZLF1 promoter. In Epstein-Barr virus (strain AG876) (HHV-4), this protein is Transcriptional activator BRRF1.